Consider the following 52-residue polypeptide: Creatine kinase B-type (52 aa).

The Phosphagen kinase C-terminal domain occupies 1–52; that stretch reads AKVLTLDLYKKLRDKSTPSGFTLDDIIQNEHLGYVLTCPSNLGTXLRAXVHV. A Phosphagen kinase N-terminal domain is found at 1-52; it reads AKVLTLDLYKKLRDKSTPSGFTLDDIIQNEHLGYVLTCPSNLGTXLRAXVHV. Positions 13 and 47 each coordinate ATP.

Belongs to the ATP:guanido phosphotransferase family. As to quaternary structure, dimer of identical or non-identical chains, which can be either B (brain type) or M (muscle type). With MM being the major form in skeletal muscle and myocardium, MB existing in myocardium, and BB existing in many tissues, especially brain. In terms of tissue distribution, expressed in rectal gland, brain, skeletal muscle (at protein level).

It localises to the cytoplasm. It is found in the cytosol. The protein localises to the mitochondrion. The protein resides in the basal cell membrane. The catalysed reaction is creatine + ATP = N-phosphocreatine + ADP + H(+). Functionally, reversibly catalyzes the transfer of phosphate between ATP and various phosphogens (e.g. creatine phosphate). Creatine kinase isoenzymes play a central role in energy transduction in tissues with large, fluctuating energy demands, such as skeletal muscle, heart, brain and spermatozoa. In Squalus acanthias (Spiny dogfish), this protein is Creatine kinase B-type.